An 86-amino-acid chain; its full sequence is Testis-expressed protein 54 (86 aa).

Over residues 1 to 34 (MGCCQDKNRWASDEQARDEVTEDGREGNEVDNSG) the composition is skewed to basic and acidic residues. 2 disordered regions span residues 1-43 (MGCC…SNES) and 57-86 (SRRE…PEKG).

In terms of tissue distribution, expressed in Testis.

This Mus musculus (Mouse) protein is Testis-expressed protein 54.